The sequence spans 192 residues: Ribosome maturation factor RimM (192 aa).

In terms of domain architecture, PRC barrel spans 99–186; that stretch reads ADEYHVSELV…RIEIAPPPGL (88 aa).

It belongs to the RimM family. In terms of assembly, binds ribosomal protein uS19.

It localises to the cytoplasm. Functionally, an accessory protein needed during the final step in the assembly of 30S ribosomal subunit, possibly for assembly of the head region. Essential for efficient processing of 16S rRNA. May be needed both before and after RbfA during the maturation of 16S rRNA. It has affinity for free ribosomal 30S subunits but not for 70S ribosomes. In Microcystis aeruginosa (strain NIES-843 / IAM M-2473), this protein is Ribosome maturation factor RimM.